A 1485-amino-acid chain; its full sequence is ABC multidrug transporter I (1485 aa).

Disordered stretches follow at residues 1–57 and 75–111; these read MDEK…EEFS and KQIS…ALRG. Residues 8 to 24 are compositionally biased toward polar residues; the sequence is SESSNGSDVDSLSTASA. An N-linked (GlcNAc...) asparagine glycan is attached at Asn12. Residues 85–95 show a composition bias toward basic and acidic residues; sequence GKTEDVERSDS. 3 N-linked (GlcNAc...) asparagine glycosylation sites follow: Asn132, Asn335, and Asn451. The region spanning 163-411 is the ABC transporter 1 domain; sequence MHMLGYGKKG…FESLGFKERP (249 aa). 7 consecutive transmembrane segments (helical) span residues 522–542, 556–576, 600–620, 623–643, 664–684, 691–711, and 774–794; these read FAQT…GTVW, GGLL…ELVS, IAQI…FSII, FMCG…IIVL, YAMK…GYLI, EWLR…ALMV, and FGIM…HGET. One can recognise an ABC transporter 2 domain in the interval 846-1089; sequence FTWEDVCYDV…LLDYFRRNGA (244 aa). Residue 882–889 participates in ATP binding; it reads GASGAGKT. The next 5 helical transmembrane spans lie at 1184-1204, 1211-1231, 1268-1288, 1299-1319, and 1325-1345; these read YGFT…LAFL, ASLQ…AIIL, LPYS…IPGF, FLMV…ISAL, and IASQ…GVAI. N-linked (GlcNAc...) asparagine glycans are attached at residues Asn1396 and Asn1418. Residues 1449–1469 traverse the membrane as a helical segment; it reads LGIFLAFIGSNLIILFLAVSF.

This sequence belongs to the ABC transporter superfamily. ABCG family. PDR (TC 3.A.1.205) subfamily.

It localises to the cell membrane. It carries out the reaction fluconazole(in) + ATP + H2O = fluconazole(out) + ADP + phosphate + H(+). Its activity is regulated as follows. The efflux inhibitor FK506 does not impair the transport activity. In terms of biological role, ABC efflux transporter that confers resistance to fluconazole (FLC) but shows no resistance to other azoles. Is also able to transport rhodamine 6G (R-6G), a known substrate for many ABC transporters. The chain is ABC multidrug transporter I from Aspergillus fumigatus (strain ATCC MYA-4609 / CBS 101355 / FGSC A1100 / Af293) (Neosartorya fumigata).